The sequence spans 310 residues: Oxygen-dependent coproporphyrinogen-III oxidase (310 aa).

Ser-97 lines the substrate pocket. The a divalent metal cation site is built by His-101 and His-111. His-111 (proton donor) is an active-site residue. 113–115 (NFR) is a binding site for substrate. A divalent metal cation contacts are provided by His-150 and His-180. Residues 245 to 280 (YVEFNLLYDRGTRFGLEFGGRTESILMSLPPRVVWR) form an important for dimerization region. Position 263 to 265 (263 to 265 (GGR)) interacts with substrate.

The protein belongs to the aerobic coproporphyrinogen-III oxidase family. Homodimer. It depends on a divalent metal cation as a cofactor.

It localises to the cytoplasm. The enzyme catalyses coproporphyrinogen III + O2 + 2 H(+) = protoporphyrinogen IX + 2 CO2 + 2 H2O. It functions in the pathway porphyrin-containing compound metabolism; protoporphyrin-IX biosynthesis; protoporphyrinogen-IX from coproporphyrinogen-III (O2 route): step 1/1. Functionally, involved in the heme biosynthesis. Catalyzes the aerobic oxidative decarboxylation of propionate groups of rings A and B of coproporphyrinogen-III to yield the vinyl groups in protoporphyrinogen-IX. The protein is Oxygen-dependent coproporphyrinogen-III oxidase of Coxiella burnetii (strain RSA 331 / Henzerling II).